The following is a 76-amino-acid chain: Signal recognition particle 9 kDa protein (76 aa).

This sequence belongs to the SRP9 family. As to quaternary structure, heterodimer with SRP14; binds RNA as heterodimer. Component of a signal recognition particle complex that consists of a 7SL RNA molecule of 300 nucleotides and six protein subunits: srpa-72, srpa-68, SRP54, F37F2.2/SRP19, F25G6.8/SRP14 and ZK512.4/SRP9.

Its subcellular location is the cytoplasm. Functionally, component of the signal recognition particle (SRP) complex, a ribonucleoprotein complex that mediates the cotranslational targeting of secretory and membrane proteins to the endoplasmic reticulum (ER). SRP9 together with SRP14 and the Alu portion of the SRP RNA, constitutes the elongation arrest domain of SRP. The complex of SRP9 and SRP14 is required for SRP RNA binding. In Caenorhabditis elegans, this protein is Signal recognition particle 9 kDa protein.